The chain runs to 243 residues: GTP cyclohydrolase 1 (243 aa).

Phosphothreonine is present on T15. Residues 18–55 (NIRPTSPYTLNPPVERDGFSWPSVGTRQRAEETEEEEK) are disordered. Phosphoserine is present on S23. Positions 132, 135, and 203 each coordinate Zn(2+).

Belongs to the GTP cyclohydrolase I family. Homodimer.

It catalyses the reaction GTP + H2O = 7,8-dihydroneopterin 3'-triphosphate + formate + H(+). The protein operates within cofactor biosynthesis; 7,8-dihydroneopterin triphosphate biosynthesis; 7,8-dihydroneopterin triphosphate from GTP: step 1/1. GTP cyclohydrolase 1 is the first enzyme in the biosynthetic pathway leading to folic acid. The polypeptide is GTP cyclohydrolase 1 (Saccharomyces cerevisiae (strain ATCC 204508 / S288c) (Baker's yeast)).